The primary structure comprises 340 residues: Alpha-1,4-N-acetylglucosaminyltransferase (340 aa).

Topologically, residues 1-4 (MRKE) are cytoplasmic. The helical; Signal-anchor for type II membrane protein transmembrane segment at 5-25 (LQLSLSVTLLLVCGFLYQFTL) threads the bilayer. Residues 26-340 (KSSCLFCLPS…VTGELGPGNK (315 aa)) lie on the Lumenal side of the membrane. 2 N-linked (GlcNAc...) asparagine glycosylation sites follow: Asn-99 and Asn-138. The DXD motif signature appears at 167 to 169 (DTD). 2 N-linked (GlcNAc...) asparagine glycosylation sites follow: Asn-251 and Asn-282.

This sequence belongs to the glycosyltransferase 32 family. As to expression, detected in stomach and pancreas.

The protein resides in the golgi apparatus membrane. It functions in the pathway protein modification; protein glycosylation. Catalyzes the transfer of N-acetylglucosamine (GlcNAc) to core 2 branched O-glycans. Necessary for the synthesis of type III mucin which is specifically produced in the stomach, duodenum, and pancreatic duct. May protect against inflammation-associated gastric adenocarcinomas. The chain is Alpha-1,4-N-acetylglucosaminyltransferase (A4GNT) from Homo sapiens (Human).